The chain runs to 182 residues: Orotate phosphoribosyltransferase (182 aa).

5-phospho-alpha-D-ribose 1-diphosphate contacts are provided by residues Arg-96, Lys-97, Lys-100, His-102, and 122–130; that span reads EDTSTTGGS. Residues Thr-126 and Arg-154 each coordinate orotate.

Belongs to the purine/pyrimidine phosphoribosyltransferase family. PyrE subfamily. Homodimer. The cofactor is Mg(2+).

It carries out the reaction orotidine 5'-phosphate + diphosphate = orotate + 5-phospho-alpha-D-ribose 1-diphosphate. It participates in pyrimidine metabolism; UMP biosynthesis via de novo pathway; UMP from orotate: step 1/2. Functionally, catalyzes the transfer of a ribosyl phosphate group from 5-phosphoribose 1-diphosphate to orotate, leading to the formation of orotidine monophosphate (OMP). In Streptomyces avermitilis (strain ATCC 31267 / DSM 46492 / JCM 5070 / NBRC 14893 / NCIMB 12804 / NRRL 8165 / MA-4680), this protein is Orotate phosphoribosyltransferase.